A 357-amino-acid polypeptide reads, in one-letter code: DNA primase small subunit PriS (357 aa).

Residues aspartate 105, aspartate 107, and aspartate 259 contribute to the active site.

It belongs to the eukaryotic-type primase small subunit family. As to quaternary structure, heterodimer of a small subunit (PriS) and a large subunit (PriL). It depends on Mg(2+) as a cofactor. Requires Mn(2+) as cofactor.

Its function is as follows. Catalytic subunit of DNA primase, an RNA polymerase that catalyzes the synthesis of short RNA molecules used as primers for DNA polymerase during DNA replication. The small subunit contains the primase catalytic core and has DNA synthesis activity on its own. Binding to the large subunit stabilizes and modulates the activity, increasing the rate of DNA synthesis while decreasing the length of the DNA fragments, and conferring RNA synthesis capability. The DNA polymerase activity may enable DNA primase to also catalyze primer extension after primer synthesis. May also play a role in DNA repair. The sequence is that of DNA primase small subunit PriS from Methanococcus maripaludis (strain C6 / ATCC BAA-1332).